Reading from the N-terminus, the 363-residue chain is tRNA/tmRNA (uracil-C(5))-methyltransferase (363 aa).

Residues glutamine 187, tyrosine 215, asparagine 220, glutamate 236, and aspartate 296 each contribute to the S-adenosyl-L-methionine site. The Nucleophile role is filled by cysteine 321. Glutamate 355 functions as the Proton acceptor in the catalytic mechanism.

It belongs to the class I-like SAM-binding methyltransferase superfamily. RNA M5U methyltransferase family. TrmA subfamily.

The enzyme catalyses uridine(54) in tRNA + S-adenosyl-L-methionine = 5-methyluridine(54) in tRNA + S-adenosyl-L-homocysteine + H(+). It carries out the reaction uridine(341) in tmRNA + S-adenosyl-L-methionine = 5-methyluridine(341) in tmRNA + S-adenosyl-L-homocysteine + H(+). In terms of biological role, dual-specificity methyltransferase that catalyzes the formation of 5-methyluridine at position 54 (m5U54) in all tRNAs, and that of position 341 (m5U341) in tmRNA (transfer-mRNA). This Pseudomonas aeruginosa (strain UCBPP-PA14) protein is tRNA/tmRNA (uracil-C(5))-methyltransferase.